The primary structure comprises 217 residues: 3,4-dihydroxy-2-butanone 4-phosphate synthase (217 aa).

Residues 40–41 (RE), aspartate 45, 153–157 (RRGHT), and glutamate 177 contribute to the D-ribulose 5-phosphate site. Residue glutamate 41 participates in Mg(2+) binding. Residue histidine 156 coordinates Mg(2+).

The protein belongs to the DHBP synthase family. Homodimer. The cofactor is Mg(2+). It depends on Mn(2+) as a cofactor.

It catalyses the reaction D-ribulose 5-phosphate = (2S)-2-hydroxy-3-oxobutyl phosphate + formate + H(+). The protein operates within cofactor biosynthesis; riboflavin biosynthesis; 2-hydroxy-3-oxobutyl phosphate from D-ribulose 5-phosphate: step 1/1. Functionally, catalyzes the conversion of D-ribulose 5-phosphate to formate and 3,4-dihydroxy-2-butanone 4-phosphate. In Aliivibrio fischeri (Vibrio fischeri), this protein is 3,4-dihydroxy-2-butanone 4-phosphate synthase.